A 711-amino-acid chain; its full sequence is Ferric reductase transmembrane component 3 (711 aa).

Positions 1-20 are cleaved as a signal peptide; the sequence is MYWVLLCGSILLCCLSGASA. Topologically, residues 21-166 are extracellular; it reads SPAKTKMYGK…YANYDIGHTY (146 aa). N-linked (GlcNAc...) asparagine glycans are attached at residues N85, N108, N120, and N134. Residues 167 to 187 traverse the membrane as a helical segment; sequence GGIICAYFVGVMILASILHYL. Residues 188 to 237 are Cytoplasmic-facing; the sequence is SYTPFKTALFKQRLVRYVRRYLTIPTIWGKHASSFSYLKIFTGFLPTRSE. Residues 238–258 form a helical membrane-spanning segment; it reads GVIILGYLVLHTVFLAYGYQY. The Extracellular portion of the chain corresponds to 259–280; it reads DPYNLIFDSRREQIARYVADRS. One can recognise a Ferric oxidoreductase domain in the interval 280 to 414; the sequence is SGVLAFAHFP…SGIEWIYAAI (135 aa). A helical transmembrane segment spans residues 281 to 301; it reads GVLAFAHFPLIALFAGRNNFL. Residues 302–321 lie on the Cytoplasmic side of the membrane; that stretch reads EFISGVKYTSFIMFHKWLGR. Heme contacts are provided by H316 and H330. Residues 322-341 traverse the membrane as a helical segment; the sequence is MMFLDAVIHGAAYTSYSVFY. Residues 342-353 are Extracellular-facing; sequence KDWAASKEETYW. A helical membrane pass occupies residues 354 to 374; it reads QFGVAALCIVGVMVFFSLAMF. Residues 375-376 lie on the Cytoplasmic side of the membrane; that stretch reads RK. The chain crosses the membrane as a helical span at residues 377–397; it reads FFYEAFLFLHIVLGALFFYTC. H386 contributes to the heme binding site. Position 398 (W398) is a topological domain, extracellular. A helical membrane pass occupies residues 399–419; sequence EHVVELSGIEWIYAAIAIWTI. H400 is a heme binding site. The FAD-binding FR-type domain maps to 415 to 534; that stretch reads AIWTIDRLIR…EGPYGSSSPV (120 aa). Over 420–711 the chain is Cytoplasmic; that stretch reads DRLIRIVRVS…IEYFEEYQSW (292 aa). 479 to 485 contacts FAD; that stretch reads HPFTVLD. NADP(+) contacts are provided by residues 526-529 and 677-678; these read GPYG and CG.

It belongs to the ferric reductase (FRE) family. Requires FAD as cofactor. Heme serves as cofactor.

Its subcellular location is the cell membrane. It carries out the reaction 2 a Fe(II)-siderophore + NADP(+) + H(+) = 2 a Fe(III)-siderophore + NADPH. Functionally, siderophore-iron reductase responsible for reducing extracellular iron prior to import. Catalyzes the reductive uptake of Fe(3+) bound to di- and trihydroxamate siderophores. Fe(3+) is reduced to Fe(2+), which then dissociates from the siderophore and can be imported by the high-affinity Fe(2+) transport complex in the plasma membrane. In Saccharomyces cerevisiae (strain ATCC 204508 / S288c) (Baker's yeast), this protein is Ferric reductase transmembrane component 3 (FRE3).